A 157-amino-acid polypeptide reads, in one-letter code: Protein Smg homolog (157 aa).

Belongs to the Smg family.

This Shewanella pealeana (strain ATCC 700345 / ANG-SQ1) protein is Protein Smg homolog.